The following is a 332-amino-acid chain: MKIIAYAVRDDERPFFDTWMKENPDVEVKLVPELLTEDNVDLAKGFDGADVYQQKDYTAEVLNKLADEGVKNISLRNVGVDNLDVPTVKARGLNISNVPAYSPNAIAELSVTQLMQLLRQTPMFNKKLAKQDFRWAPDIAKELNTMTVGVIGTGRIGRAAIDIFKGFGAKVIGYDVYRNAELEKEGMYVDTLDELYAQADVITLHVPALKDNYHMLNADAFSKMKDGAYILNFARGTLIDSEDLIKALDSGKVAGAALVTYEYETKIFNKDLEGQTIDDKVFMNLFNRDNVLITPHTAFYTETAVHNMVHVSMNSNKQFIETGKADTQVKFD.

NAD(+) contacts are provided by residues 155–156, Asp175, 206–207, Asn212, and 233–235; these read RI, VP, and FAR. Active-site residues include Arg235 and Glu264. His296 functions as the Proton donor in the catalytic mechanism.

It belongs to the D-isomer specific 2-hydroxyacid dehydrogenase family. As to quaternary structure, homodimer.

It carries out the reaction (R)-lactate + NAD(+) = pyruvate + NADH + H(+). This Lactiplantibacillus pentosus (Lactobacillus pentosus) protein is D-lactate dehydrogenase.